We begin with the raw amino-acid sequence, 143 residues long: AP-2 complex subunit sigma (143 aa).

This sequence belongs to the adaptor complexes small subunit family. Adaptor protein complex 2 (AP-2) is a heterotetramer composed of two large adaptins (alpha-type subunit APL3 and beta-type subunit APL1), a medium chain (mu-type subunit APM4) and a small adaptin (sigma-type subunit APS2).

It localises to the cell membrane. The protein localises to the membrane. It is found in the coated pit. Component of the adaptor complexes which link clathrin to receptors in coated vesicles. Clathrin-associated protein complexes are believed to interact with the cytoplasmic tails of membrane proteins, leading to their selection and concentration. The sequence is that of AP-2 complex subunit sigma (APS2) from Gibberella zeae (strain ATCC MYA-4620 / CBS 123657 / FGSC 9075 / NRRL 31084 / PH-1) (Wheat head blight fungus).